We begin with the raw amino-acid sequence, 311 residues long: UDP-N-acetylenolpyruvoylglucosamine reductase (311 aa).

An FAD-binding PCMH-type domain is found at 28–197 (KIGGNARWLV…VSARFHLARG (170 aa)). Residue Arg-177 is part of the active site. Ser-226 serves as the catalytic Proton donor. Glu-296 is a catalytic residue.

The protein belongs to the MurB family. Requires FAD as cofactor.

It is found in the cytoplasm. It carries out the reaction UDP-N-acetyl-alpha-D-muramate + NADP(+) = UDP-N-acetyl-3-O-(1-carboxyvinyl)-alpha-D-glucosamine + NADPH + H(+). Its pathway is cell wall biogenesis; peptidoglycan biosynthesis. Functionally, cell wall formation. This chain is UDP-N-acetylenolpyruvoylglucosamine reductase, found in Magnetococcus marinus (strain ATCC BAA-1437 / JCM 17883 / MC-1).